A 150-amino-acid polypeptide reads, in one-letter code: Endoribonuclease YbeY (150 aa).

Positions 116, 120, and 126 each coordinate Zn(2+).

It belongs to the endoribonuclease YbeY family. The cofactor is Zn(2+).

The protein resides in the cytoplasm. Functionally, single strand-specific metallo-endoribonuclease involved in late-stage 70S ribosome quality control and in maturation of the 3' terminus of the 16S rRNA. This chain is Endoribonuclease YbeY, found in Mesomycoplasma hyopneumoniae (strain 232) (Mycoplasma hyopneumoniae).